Reading from the N-terminus, the 1050-residue chain is MQLPRGSRVPGLVATFLFPVLCALLTFSSVRGFNLAVEQPAVYTGASGSFFGFSVDFYLPDAQSISILVGAPKANTSQPGVFEGGAVFYCPWQRNGTNCTEISFDSHGDRQRELFDTPQPKHMESKSEQWFGATVRAHGKTILACAPRYSWRTEKEEKRSDPVGTCYLSVNNFTTFVEYSPCRTDFSDAAGQGYCQGGFSAEFTKSGRVLLGGPGSYFWQGQVITATQDEIQEAYYPEYFVLEYKKQMQTRQAASSYDDSYFGYSVAVGEFSEDATEDFVVGVPKGNITYGYVTILNGTDLRSLYNFSGEQMASYFGYSVSATDLNSDGLDDLLIGAPLFMDRTHDGRVQEVGRVYVYLQGDHMESTPHLILTGMEEYGRFGSSIASLGDLDQDGFNDIAIGAPFGGEAQRGAVFIFNGQPGGVDSKPSQVLQGQWGSSQQPSFFGLSTRGGHDLDGNGYPDLIVGAFGVDTTLVYRGRPIIHASASLSISPNMFNPEEKTCTLEGNASAVSCINLSFCLNASGKHVPNSIGIKVELQLDQTKQKGAVKRALFLKTRQPQLTQTIHLLNGGKEECRAMKIYLREESEFRDKLSPIYVGLNFSLDPLAPADAHGLMPIFNYKTKNYIEQKAQIQLDCGEDNICVPDLKLNVSGDRKSVYLGDENFLTLFFNAQNLGGGAYEAELYVTLPPEAEYSGIVRNNEHLLILPCAYEMENQTRLVICDLGNPMKAGASLAGGLRFTVPHLRDSSHKVQFDFQIRSKNQNNSQSETVHLALNVEAHSTVSFFGASKPDSVIFPVANWKPGRNPVTGQEAGPEVKHVYELVNFGPSSISQGILELRCPMRVNKEYAMYVMSYAVQGLTNCTSNHPANALHLQHSPTDHPPTLNPKTVHHVERRDTARLISGSSNVLKCNEPHVDCFHLHCDVGPLEKQKRAILRVNFLVWANTFMQKENQGFTLQCDALYHIQKLPYKILPHVYPKGTHQVDTAIHWAKPESSYGVPLWIIILAILIGLLLLALLIYVLYKLGFFKRSYQYGTAMEKAELKPQAASEA.

Positions M1–G32 are cleaved as a signal peptide. Topologically, residues F33 to Y996 are extracellular. FG-GAP repeat units lie at residues N34–C99, D116–T175, R183–Y235, Q249–L301, R302–T367, P368–S426, and Q430–N493. N75, N95, and N98 each carry an N-linked (GlcNAc...) asparagine glycan. 2 disulfide bridges follow: C90–C99 and C145–C166. A glycan (N-linked (GlcNAc...) asparagine) is linked at N172. A disulfide bridge connects residues C182 and C195. 5 residues coordinate Ca(2+): E270, S272, D274, T276, and D278. Residues N287, N297, and N306 are each glycosylated (N-linked (GlcNAc...) asparagine). Ca(2+) is bound by residues D324, N326, D328, L330, D332, D390, D392, D394, D398, D454, D456, N458, Y460, and D462. C502 and C513 are oxidised to a cystine. N507, N515, N521, and N600 each carry an N-linked (GlcNAc...) asparagine glycan. A disulfide bridge connects residues C519 and C575. The cysteines at positions 636 and 642 are disulfide-linked. Residues N649, N714, N763, and N861 are each glycosylated (N-linked (GlcNAc...) asparagine). A disulfide bridge connects residues C708 and C721. Intrachain disulfides connect C839–C958, C862–C922, and C910–C917. A helical transmembrane segment spans residues G997–Y1022. The Cytoplasmic segment spans residues K1023 to A1050. Positions G1025–R1029 match the GFFKR motif motif.

Belongs to the integrin alpha chain family. Heterodimer of an alpha and a beta subunit. The alpha subunit is composed of a heavy and a light chain linked by a disulfide bond. Alpha-5 associates with beta-1.

It localises to the cell membrane. It is found in the cell junction. The protein localises to the focal adhesion. Its function is as follows. Integrin alpha-5/beta-1 (ITGA5:ITGB1) is a receptor for fibronectin. It recognizes the sequence R-G-D in its ligands. ITGA5:ITGB1 acts as a receptor for fibrillin-1 (FBN1) and mediates R-G-D-dependent cell adhesion to FBN1. ITGA5:ITGB1 acts as a receptor for fibronectin (FN1) and mediates R-G-D-dependent cell adhesion to FN1. ITGA5:ITGB1 is a receptor for IL1B and binding is essential for IL1B signaling. ITGA5:ITGB3 is a receptor for soluble CD40LG and is required for CD40/CD40LG signaling. The polypeptide is Integrin alpha-5 (itga5) (Xenopus laevis (African clawed frog)).